We begin with the raw amino-acid sequence, 220 residues long: Increased recombination centers protein 22 (220 aa).

A signal peptide spans 1–19; the sequence is MKLSNLLLFANVGTLLVKA. At 20 to 166 the chain is on the lumenal side; the sequence is TDENISPNEE…PPPMSFFNPK (147 aa). The helical transmembrane segment at 167–186 threads the bilayer; the sequence is FLSIQAVLIGVISYFTYFIF. The Cytoplasmic segment spans residues 187 to 220; it reads RSSKKERRGVVSKTKAPKKVKLDESWLPENHLKK.

The protein belongs to the IRC22 family.

The protein localises to the endoplasmic reticulum membrane. In terms of biological role, is probably involved in a pathway contributing to genomic integrity. The sequence is that of Increased recombination centers protein 22 (IRC22) from Eremothecium gossypii (strain ATCC 10895 / CBS 109.51 / FGSC 9923 / NRRL Y-1056) (Yeast).